We begin with the raw amino-acid sequence, 765 residues long: Carboxysome assembly protein CsoS2 (765 aa).

The span at 1-22 (MSTKTSREIALERRKAMSDGGK) shows a compositional bias: basic and acidic residues. 2 disordered regions span residues 1 to 107 (MSTK…RTDV) and 165 to 229 (REAQ…NKNG). The N-terminal domain stretch occupies residues 1-215 (MSTKTSREIA…RSKTGSTSKQ (215 aa)). An N-repeat 1 repeat occupies 7-22 (REIALERRKAMSDGGK). The segment covering 38–63 (SQDINSTGATSSNKKVLTSPSKSNIP) has biased composition (polar residues). Basic and acidic residues predominate over residues 77–87 (SSKELGIERRK). N-repeat repeat units follow at residues 79–94 (KELGIERRKAMSTHGK), 158–173 (RDIVLARREAQSKHGK), and 196–211 (REISQRVRELRSKTGS). Basic and acidic residues predominate over residues 187–207 (RRGDPDLSSREISQRVRELRS). The tract at residues 216–586 (GNGKCRPCGP…LSNCETPPND (371 aa)) is middle region. 6 M-repeat repeats span residues 240–289 (KVGK…GQFC), 300–349 (RASV…KKYC), 358–397 (KVMQSITTDGLKVSGSLPGRSSLVTGDESGSGKQLTGDQY), 411–460 (KVGS…EKFC), 470–519 (KVGL…NDNC), and 530–580 (RATV…LSNC). Disordered regions lie at residues 306–328 (TTSGNKVTGNEVGRSEKVTGDEP) and 367–413 (GLKV…EKVG). Residues 589–734 (YANQEKSASN…AMPPVDNKRN (146 aa)) are C-terminal domain. C-repeat repeat units follow at residues 604–648 (SVNS…GTEQ) and 677–711 (KKEPSKITGEGQSAGNITGDDWDRGDKVTGTEGVS). Disordered stretches follow at residues 611 to 637 (EKYSAKNTEGVTGNRYEDSSKITGPFD) and 656 to 765 (NMTY…GARG). Positions 730–741 (DNKRNDETEKPD) are enriched in basic and acidic residues. Residues 735–765 (DETEKPDFLITGSSGNTRDGQLVTFSGGARG) form a C-terminal peptide region.

It belongs to the CsoS2 family. As to quaternary structure, probably interacts with the carboxysome major shell protein CsoS1 via the N-terminal domain. A CsoS1-CsoS1D-CsoS2 complex can be isolated following expression in E.coli. Interacts via its N-terminal repeats with RuBisCO. In terms of processing, unlike H.neapolitanus and predictions for P.marinus strain MIT 9313, this protein is not thought to have ribosomal frameshifting.

The protein resides in the carboxysome. Its function is as follows. Required for alpha-carboxysome (Cb) assembly, mediates interaction between RuBisCO and the Cb shell. The protein is probably highly flexible. The C-terminal repeats act as the encapsulation signal to target proteins to the Cb; they are necessary and sufficient to target both CsoS2 and foreign proteins to the Cb. The N-terminal repeats of this protein bind simultaneously to both subunits of RuBisCO. Probably also interacts with the major shell proteins (CsoS1); that interaction would increase the local concentration of CsoS2 so that it can condense RuBisCO and full carboxysomes can be formed. There are estimated to be 163 CsoS2 proteins per carboxysome; unlike H.neapolitanus only 1 form is seen. The polypeptide is Carboxysome assembly protein CsoS2 (Prochlorococcus marinus subsp. pastoris (strain CCMP1986 / NIES-2087 / MED4)).